A 736-amino-acid polypeptide reads, in one-letter code: MSADPPITPELVAAHGLKPDEYQRILTLIGREPSFTELGIFSAMWNEHCSYKSSRIHLRKLPTKAPWVIQGPGENAGVIDIGDGEACIFKMESHNHPSYIEPHQGAATGVGGILRDVFTMGARPVASLDLLRFGAPEHPLMRHLIAGVASGIGSYGNSFGVPTVGGSTKFDRRYNGNILVNAMAVGIARQDEIFYAKATGVGNPIVYLGSKTGRDGIHGATMASAAFEADAQEKRPTVQVGDPFAEKLLLEACLELMKTGAVIAIQDMGAAGLTSSAVEMGAKGNLGIELDLDAVPCREPGMSAYEMLLSESQERMLMVLAPEKAAEAEAVFRKWGLDFAIIGKTTDDLRFVIKHEGEIKADLPIKELGDEAPVYDRPSVLTPRPATIAADTIVPPISHGEALLRLIGSPDLASKLWITEQYDSLILGNTIQGPGGDAALIRLGDGPKGLALTADVTQRYCEADPYEGGKQAVTMAWRNLTAVGALPLAVTDNLNFGNPENPKIMGQFIGCLEGIGEACRALDFPIVSGNVSLYNASEGQDIPPTPAIGGVGLLEDASRGATLSIKRPGDAILLLGETQGWLGASLYLRDICGREDGAPPVVDLALEKRIGNFLRGLIANRALTAVHTLTDGGLAVGLAKMALAGGIGARIDIPGHCPAHAYLFGEDQARYLVTAAPEKAEAIRIEAEQLGIACQLIGRTGGPTLELGQEASVAIEDLRRAFEEWLPNHMTGIVIE.

Histidine 48 is a catalytic residue. ATP-binding residues include tyrosine 51 and lysine 90. Glutamate 92 lines the Mg(2+) pocket. Residues 93 to 96 (SHNH) and arginine 115 each bind substrate. Histidine 94 (proton acceptor) is an active-site residue. Residue aspartate 116 coordinates Mg(2+). Glutamine 239 is a binding site for substrate. Aspartate 267 serves as a coordination point for Mg(2+). 311–313 (ESQ) lines the substrate pocket. ATP-binding residues include aspartate 492 and glycine 529. Position 530 (asparagine 530) interacts with Mg(2+). Serine 532 is a substrate binding site.

The protein belongs to the FGAMS family. In terms of assembly, monomer. Part of the FGAM synthase complex composed of 1 PurL, 1 PurQ and 2 PurS subunits.

It is found in the cytoplasm. It carries out the reaction N(2)-formyl-N(1)-(5-phospho-beta-D-ribosyl)glycinamide + L-glutamine + ATP + H2O = 2-formamido-N(1)-(5-O-phospho-beta-D-ribosyl)acetamidine + L-glutamate + ADP + phosphate + H(+). It participates in purine metabolism; IMP biosynthesis via de novo pathway; 5-amino-1-(5-phospho-D-ribosyl)imidazole from N(2)-formyl-N(1)-(5-phospho-D-ribosyl)glycinamide: step 1/2. Its function is as follows. Part of the phosphoribosylformylglycinamidine synthase complex involved in the purines biosynthetic pathway. Catalyzes the ATP-dependent conversion of formylglycinamide ribonucleotide (FGAR) and glutamine to yield formylglycinamidine ribonucleotide (FGAM) and glutamate. The FGAM synthase complex is composed of three subunits. PurQ produces an ammonia molecule by converting glutamine to glutamate. PurL transfers the ammonia molecule to FGAR to form FGAM in an ATP-dependent manner. PurS interacts with PurQ and PurL and is thought to assist in the transfer of the ammonia molecule from PurQ to PurL. This chain is Phosphoribosylformylglycinamidine synthase subunit PurL, found in Beijerinckia indica subsp. indica (strain ATCC 9039 / DSM 1715 / NCIMB 8712).